The chain runs to 457 residues: Cysteine--tRNA ligase (457 aa).

Cys27 contributes to the Zn(2+) binding site. Positions 29–39 match the 'HIGH' region motif; it reads PTVYDFAHIGN. Residues Cys211, His236, and Glu240 each coordinate Zn(2+). The 'KMSKS' region signature appears at 269 to 273; that stretch reads KMSKS. Lys272 is a binding site for ATP.

This sequence belongs to the class-I aminoacyl-tRNA synthetase family. In terms of assembly, monomer. Requires Zn(2+) as cofactor.

It is found in the cytoplasm. The catalysed reaction is tRNA(Cys) + L-cysteine + ATP = L-cysteinyl-tRNA(Cys) + AMP + diphosphate. The sequence is that of Cysteine--tRNA ligase from Ehrlichia ruminantium (strain Welgevonden).